A 359-amino-acid polypeptide reads, in one-letter code: Chorismate synthase (359 aa).

Position 47 (R47) interacts with NADP(+). FMN is bound by residues 123–125, G283, 298–302, and R326; these read RSS and KPTSS.

The protein belongs to the chorismate synthase family. As to quaternary structure, homotetramer. It depends on FMNH2 as a cofactor.

It catalyses the reaction 5-O-(1-carboxyvinyl)-3-phosphoshikimate = chorismate + phosphate. Its pathway is metabolic intermediate biosynthesis; chorismate biosynthesis; chorismate from D-erythrose 4-phosphate and phosphoenolpyruvate: step 7/7. In terms of biological role, catalyzes the anti-1,4-elimination of the C-3 phosphate and the C-6 proR hydrogen from 5-enolpyruvylshikimate-3-phosphate (EPSP) to yield chorismate, which is the branch point compound that serves as the starting substrate for the three terminal pathways of aromatic amino acid biosynthesis. This reaction introduces a second double bond into the aromatic ring system. The polypeptide is Chorismate synthase (Chlamydia abortus (strain DSM 27085 / S26/3) (Chlamydophila abortus)).